Here is a 910-residue protein sequence, read N- to C-terminus: DNA mismatch repair protein MutS (910 aa).

Residues 1–11 (MEAKVEEKEPE) are compositionally biased toward basic and acidic residues. Positions 1 to 21 (MEAKVEEKEPEPVENAGPDAP) are disordered. Position 658–665 (658–665 (GPNMGGKS)) interacts with ATP.

This sequence belongs to the DNA mismatch repair MutS family.

Functionally, this protein is involved in the repair of mismatches in DNA. It is possible that it carries out the mismatch recognition step. This protein has a weak ATPase activity. The polypeptide is DNA mismatch repair protein MutS (Brucella melitensis biotype 1 (strain ATCC 23456 / CCUG 17765 / NCTC 10094 / 16M)).